Reading from the N-terminus, the 174-residue chain is MGKITFYEDRGFQGRHYECSTDHSNLQPYFSRCNSVRVDSGCWMLYEQPNFTGCQYFLRRGDYPDYQQWMGFSDSVRSCRLIPHAGSHRIRLYEREEYRGQMIEFTEDCPSLQDRFHFNEIYSLNVLEGCWVLYDMTNYRGRQYLLRPGEYRRYHDWGAMNARVGSLRRVMDFY.

2 consecutive Beta/gamma crystallin 'Greek key' domains span residues 2–40 (GKITFYEDRGFQGRHYECSTDHSNLQPYFSRCNSVRVDS) and 41–83 (GCWM…RLIP). Residues 84–87 (HAGS) form a connecting peptide region. Beta/gamma crystallin 'Greek key' domains are found at residues 88–128 (HRIR…NVLE) and 129–171 (GCWV…RRVM).

The protein belongs to the beta/gamma-crystallin family. In terms of tissue distribution, detected in the superior olivary complex of the auditory hindbrain.

Crystallins are the dominant structural components of the vertebrate eye lens. In Mus musculus (Mouse), this protein is Gamma-crystallin D (Crygd).